The chain runs to 332 residues: MATLKDQLIQNLLKEEHVPQNKITIVGVGAVGMACAISILMKDLADEVALVDVMEDKLKGEMMDLQHGSLFLRTPKIVSGKDYNVTANSRLVIITAGARQQEGESRLNLVQRNVNIFKFIIPNIVKYSPNCKLLVVSNPVDILTYVAWKISGFPKNRVIGSGCNLDSARFRYLMGERLGVHPLSCHGWILGEHGDSSVPVWSGVNVAGVSLKNLHPELGTDADKEQWKAVHKQVVDSAYEVIKLKGYTSWAIGLSVVDLAESIMKNLRRVHPISTMIKGLYGIKEDVFLSVPCILGQNGISDVVKVTLTHEEEAYLKKSADTLWGIQKELQF.

The residue at position 2 (alanine 2) is an N-acetylalanine. N6-acetyllysine; alternate is present on lysine 5. Lysine 5 carries the post-translational modification N6-succinyllysine; alternate. Lysine 14 bears the N6-acetyllysine mark. Residue 29–57 (GAVGMACAISILMKDLADEVALVDVMEDK) participates in NAD(+) binding. Residue lysine 57 is modified to N6-acetyllysine; alternate. A Glycyl lysine isopeptide (Lys-Gly) (interchain with G-Cter in SUMO2); alternate cross-link involves residue lysine 57. The residue at position 81 (lysine 81) is an N6-acetyllysine. Residue arginine 106 participates in substrate binding. N6-acetyllysine; alternate is present on lysine 118. Residue lysine 118 is modified to N6-succinyllysine; alternate. Position 126 is an N6-acetyllysine (lysine 126). Asparagine 138 contacts NAD(+). The substrate site is built by asparagine 138 and arginine 169. The active-site Proton acceptor is the histidine 193. Lysine 224 and lysine 232 each carry N6-acetyllysine. At tyrosine 239 the chain carries Phosphotyrosine. At lysine 243 the chain carries N6-acetyllysine. Threonine 248 serves as a coordination point for substrate. Threonine 309 carries the phosphothreonine modification. The residue at position 318 (lysine 318) is an N6-acetyllysine; alternate. An N6-succinyllysine; alternate modification is found at lysine 318. Threonine 322 carries the post-translational modification Phosphothreonine.

It belongs to the LDH/MDH superfamily. LDH family. Homotetramer. Interacts with PTEN upstream reading frame protein MP31. In terms of processing, ISGylated.

The protein resides in the cytoplasm. The enzyme catalyses (S)-lactate + NAD(+) = pyruvate + NADH + H(+). It functions in the pathway fermentation; pyruvate fermentation to lactate; (S)-lactate from pyruvate: step 1/1. Interconverts simultaneously and stereospecifically pyruvate and lactate with concomitant interconversion of NADH and NAD(+). This chain is L-lactate dehydrogenase A chain (LDHA), found in Bos mutus grunniens (Wild yak).